Here is a 333-residue protein sequence, read N- to C-terminus: Anthranilate phosphoribosyltransferase (333 aa).

5-phospho-alpha-D-ribose 1-diphosphate is bound by residues Gly-80, 83-84 (GD), Ser-88, 90-93 (NIST), 108-116 (KHGNRSVSS), and Ser-120. Gly-80 is a binding site for anthranilate. Ser-92 is a Mg(2+) binding site. Asn-111 is an anthranilate binding site. Arg-166 contributes to the anthranilate binding site. Asp-224 and Glu-225 together coordinate Mg(2+).

Belongs to the anthranilate phosphoribosyltransferase family. Homodimer. Requires Mg(2+) as cofactor.

The catalysed reaction is N-(5-phospho-beta-D-ribosyl)anthranilate + diphosphate = 5-phospho-alpha-D-ribose 1-diphosphate + anthranilate. The protein operates within amino-acid biosynthesis; L-tryptophan biosynthesis; L-tryptophan from chorismate: step 2/5. In terms of biological role, catalyzes the transfer of the phosphoribosyl group of 5-phosphorylribose-1-pyrophosphate (PRPP) to anthranilate to yield N-(5'-phosphoribosyl)-anthranilate (PRA). The polypeptide is Anthranilate phosphoribosyltransferase (Yersinia pseudotuberculosis serotype O:1b (strain IP 31758)).